An 84-amino-acid chain; its full sequence is Small ribosomal subunit protein uS17 (84 aa).

This sequence belongs to the universal ribosomal protein uS17 family. As to quaternary structure, part of the 30S ribosomal subunit.

One of the primary rRNA binding proteins, it binds specifically to the 5'-end of 16S ribosomal RNA. This chain is Small ribosomal subunit protein uS17, found in Erwinia tasmaniensis (strain DSM 17950 / CFBP 7177 / CIP 109463 / NCPPB 4357 / Et1/99).